We begin with the raw amino-acid sequence, 155 residues long: Endoribonuclease YbeY (155 aa).

Zn(2+) contacts are provided by His120, His124, and His130.

The protein belongs to the endoribonuclease YbeY family. Zn(2+) serves as cofactor.

The protein resides in the cytoplasm. Its function is as follows. Single strand-specific metallo-endoribonuclease involved in late-stage 70S ribosome quality control and in maturation of the 3' terminus of the 16S rRNA. The sequence is that of Endoribonuclease YbeY from Staphylococcus aureus (strain MSSA476).